A 534-amino-acid polypeptide reads, in one-letter code: Nuclear hormone receptor FTZ-F1 (534 aa).

Positions 86–161 form a DNA-binding region, nuclear receptor; that stretch reads EELCPVCGDK…VGMKLEAVRA (76 aa). 2 NR C4-type zinc fingers span residues 89–109 and 125–149; these read CPVCGDKVSGYHYGLLTCESC and CVAERACHIDKTQRKRCPFCRFQKC. Low complexity predominate over residues 227 to 246; that stretch reads VSSLTSSPESSPGPALLGAQ. A disordered region spans residues 227–296; it reads VSSLTSSPES…SSTAEATSTE (70 aa). Positions 247–256 are enriched in pro residues; that stretch reads PQPPQPPPPP. Residues 278–296 are compositionally biased toward low complexity; that stretch reads TQSNTAATPSSTAEATSTE. The 233-residue stretch at 299-531 folds into the NR LBD domain; that stretch reads RVSPMIREFV…TLLMEMLHAK (233 aa).

It belongs to the nuclear hormone receptor family. NR5 subfamily. As to expression, present in all tissues examined.

It is found in the nucleus. Functionally, may play an important role in development. The polypeptide is Nuclear hormone receptor FTZ-F1 (FTZ-F1) (Bombyx mori (Silk moth)).